Here is a 397-residue protein sequence, read N- to C-terminus: MAANLLEQLRGMTVVVADTGGIQSIATFTPRDATTNPSLITAAAQMPQYQSIIDDTLRQVRTELGAEAPVEAIVAEAIDELFVAFGLRILEIVPGRVSTEVDARLSYDTEATIAKARKLIGLYERAGIRRDRVLIKIASTWEGIRAAEVLEKEGIHCNLTLLFGFHQAVACAEAGVTLISPFVGRILDWYKKESGRDAFPGAEDPGVQSVTQIYNYYKKFGYATEVMGASFRNISEIIELAGCDLLTISPGLLEELRQTEALLERKLDPAIAESLELEQIHLDRDRFAELHQADRMANEKLDEGIRGFCKAIDTLEGLLKQRLAVLEGKAVFHHAAHEVFSVCDLDGDGFITREEWLGSDAVFDALDLNKDGKLNEEDLLAGLGATLQMAGRAVATV.

Catalysis depends on Lys-136, which acts as the Schiff-base intermediate with substrate.

The protein belongs to the transaldolase family. Type 1 subfamily. In terms of assembly, homodimer.

The protein localises to the cytoplasm. The enzyme catalyses D-sedoheptulose 7-phosphate + D-glyceraldehyde 3-phosphate = D-erythrose 4-phosphate + beta-D-fructose 6-phosphate. It participates in carbohydrate degradation; pentose phosphate pathway; D-glyceraldehyde 3-phosphate and beta-D-fructose 6-phosphate from D-ribose 5-phosphate and D-xylulose 5-phosphate (non-oxidative stage): step 2/3. Functionally, transaldolase is important for the balance of metabolites in the pentose-phosphate pathway. The sequence is that of Transaldolase from Synechococcus sp. (strain ATCC 27144 / PCC 6301 / SAUG 1402/1) (Anacystis nidulans).